The sequence spans 399 residues: MSIRYIDEIENLSGKKLFMRVDFNVPLDDNQNITEDTRIRAVLPSINYALDQKAKIILASHLGRPKGERKEKYSMAPAAKRLSRLLGKEVKLASDCIGDEVKAMINAMQPGDVIMLENVRFYAGEEKNDADFAKALANDCDVYVNDAFAVSHRAHASVEAITNCFPVVAAGFLMKNEMNYFEKAMKNPIRPLVAILGGAKVSGKIEVLENLCDKVDKIIIGGGMAFTFLKGMGYNVGKSLVEDNLIDTAMKTYEKARAQGVKFYLPVDCVVADQFNPAAETKVCPIQEIPEGWMALDVGPATVTLFTEALQNAKTIVWNGPMGVFEMDAFSRGTFAMVSAVANSYALTIVGGGDTDVAVHRAGEYAKISYISTGGGAFLELLEGKKLPGIKVLEDKGHL.

Residues 22-24 (DFN), arginine 38, 61-64 (HLGR), arginine 120, and arginine 153 contribute to the substrate site. ATP-binding positions include lysine 204, glutamate 326, and 352–355 (GGDT).

This sequence belongs to the phosphoglycerate kinase family. In terms of assembly, monomer.

It localises to the cytoplasm. The catalysed reaction is (2R)-3-phosphoglycerate + ATP = (2R)-3-phospho-glyceroyl phosphate + ADP. The protein operates within carbohydrate degradation; glycolysis; pyruvate from D-glyceraldehyde 3-phosphate: step 2/5. The sequence is that of Phosphoglycerate kinase from Geobacter sp. (strain M21).